Reading from the N-terminus, the 280-residue chain is Shikimate dehydrogenase (NADP(+)) (280 aa).

Shikimate is bound by residues 20–22 (SRS) and Thr67. Lys71 (proton acceptor) is an active-site residue. Residue Asp82 participates in NADP(+) binding. Residues Asn91 and Asp106 each coordinate shikimate. NADP(+)-binding positions include 131–135 (GAGGS) and Leu220. Residue Tyr222 participates in shikimate binding. Residue Gly243 coordinates NADP(+).

The protein belongs to the shikimate dehydrogenase family. In terms of assembly, homodimer.

The enzyme catalyses shikimate + NADP(+) = 3-dehydroshikimate + NADPH + H(+). The protein operates within metabolic intermediate biosynthesis; chorismate biosynthesis; chorismate from D-erythrose 4-phosphate and phosphoenolpyruvate: step 4/7. Its function is as follows. Involved in the biosynthesis of the chorismate, which leads to the biosynthesis of aromatic amino acids. Catalyzes the reversible NADPH linked reduction of 3-dehydroshikimate (DHSA) to yield shikimate (SA). This is Shikimate dehydrogenase (NADP(+)) from Rhodopseudomonas palustris (strain HaA2).